The primary structure comprises 871 residues: Dual O-methyltransferase/FAD-dependent monooxygenase CTB3 (871 aa).

Positions 1 to 429 (MMQFQRDLEA…GLLTVRSAGQ (429 aa)) are O-methyltransferase. Position 279 (Asp279) interacts with S-adenosyl-L-methionine. His331 acts as the Proton acceptor in catalysis. An FAD-dependent monooxygenase region spans residues 430-871 (TALSGTNTLT…NLVDCSEFVF (442 aa)). Residues Glu485, Arg569, and Ala806 each contribute to the FAD site.

This sequence in the C-terminal section; belongs to the paxM FAD-dependent monooxygenase family. The protein in the N-terminal section; belongs to the class I-like SAM-binding methyltransferase superfamily. Cation-independent O-methyltransferase family. COMT subfamily.

The catalysed reaction is nor-toralactone + S-adenosyl-L-methionine = toralactone + S-adenosyl-L-homocysteine + H(+). The enzyme catalyses toralactone + NADH + O2 + H(+) = 1-(3,4,5-trihydroxy-7-methoxynaphthalen-2-yl)propan-2-one + CO2 + NAD(+). It participates in mycotoxin biosynthesis. Its function is as follows. Dual O-methyltransferase/FAD-dependent monooxygenase; part of the gene cluster that mediates the biosynthesis of cercosporin, a light-activated, non-host-selective toxin. The perylenequinone chromophore of cercosporin absorbs light energy to attain an electronically-activated triplet state and produces active oxygen species such as the hydroxyl radical, superoxide, hydrogen peroxide or singlet oxygen upon reaction with oxygen molecules. These reactive oxygen species cause damage to various cellular components including lipids, proteins and nucleic acids. The first step of cercosporin biosynthesis is performed by the polyketide synthase CTB1 which catalyzes the formation of nor-toralactone. The starter unit acyltransferase (SAT) domain of CTB1 initiates polyketide extension by the selective utilization of acetyl-CoA, which is elongated to the heptaketide in the beta-ketoacyl synthase (KS) domain by successive condensations with six malonyl units introduced by the malonyl acyltransferase (MAT) domain. The product template (PT) domain catalyzes C4-C9 and C2-C11 aldol cyclizations and dehydrations to a trihydroxynaphthalene, which is thought to be delivered to the thioesterase (TE) domain for product release. The bifunctional enzyme CTB3 then methylates nor-toralactone to toralactone before conducting an unusual oxidative aromatic ring opening. The O-methyltransferase CTB2 further methylates the nascent OH-6 of the CBT3 product, blocking further oxidation at this site before the reductase CTB6 reduces the 2-oxopropyl ketone at position C7, giving naphthalene. The FAD-dependent monooxygenase CTB5 in concert with the multicopper oxidase CTB12 are responsible for homodimerization of naphthalene with CTB7 installing the dioxepine moiety, finally producing cercosporin. The fasciclin domain-containing protein CTB11 might act with CTB5 and CTB12 whereas the roles of CTB9 and CTB10 have still to be elucidated. The chain is Dual O-methyltransferase/FAD-dependent monooxygenase CTB3 from Cercospora nicotianae (Barn spot disease fungus).